Here is a 69-residue protein sequence, read N- to C-terminus: Protein SlyX homolog (69 aa).

Belongs to the SlyX family.

In Maricaulis maris (strain MCS10) (Caulobacter maris), this protein is Protein SlyX homolog.